A 246-amino-acid chain; its full sequence is 1-(5-phosphoribosyl)-5-[(5-phosphoribosylamino)methylideneamino] imidazole-4-carboxamide isomerase (246 aa).

The active-site Proton acceptor is aspartate 8. The active-site Proton donor is the aspartate 131.

It belongs to the HisA/HisF family.

The protein localises to the cytoplasm. The enzyme catalyses 1-(5-phospho-beta-D-ribosyl)-5-[(5-phospho-beta-D-ribosylamino)methylideneamino]imidazole-4-carboxamide = 5-[(5-phospho-1-deoxy-D-ribulos-1-ylimino)methylamino]-1-(5-phospho-beta-D-ribosyl)imidazole-4-carboxamide. The protein operates within amino-acid biosynthesis; L-histidine biosynthesis; L-histidine from 5-phospho-alpha-D-ribose 1-diphosphate: step 4/9. In Lactococcus lactis subsp. cremoris (strain MG1363), this protein is 1-(5-phosphoribosyl)-5-[(5-phosphoribosylamino)methylideneamino] imidazole-4-carboxamide isomerase.